Consider the following 85-residue polypeptide: Large ribosomal subunit protein bL27 (85 aa).

Residues 1-23 form a disordered region; the sequence is MAHKKGQGSTQNNRDSAGRRLGV.

This sequence belongs to the bacterial ribosomal protein bL27 family.

This Helicobacter hepaticus (strain ATCC 51449 / 3B1) protein is Large ribosomal subunit protein bL27.